Here is a 503-residue protein sequence, read N- to C-terminus: ESX-5 secretion system protein EccD5 (503 aa).

Helical transmembrane passes span 137–157 (VVAV…ASGV), 169–189 (LTTI…MMLL), 200–220 (VADI…ASAP), 224–244 (VGSP…ALAL), 250–270 (RLAI…ASLS), 272–292 (MVAA…CVVM), 359–379 (FLSG…TSLC), 414–434 (ITLA…YALV), 443–463 (IVAS…AVVP), and 480–500 (YLCL…YAAI).

This sequence belongs to the EccD/Snm4 family. In terms of assembly, part of the ESX-5 / type VII secretion system (T7SS), which is composed of cytosolic and membrane components. The ESX-5 membrane complex is composed of EccB5, EccC5, EccD5 and EccE5.

The protein localises to the cell inner membrane. Its function is as follows. Part of the ESX-5 specialized secretion system, which is responsible for the secretion of EsxN and a number of PE_PGRS and PPE proteins. This component is essential for ESX-5 complex stability and secretion. The protein is ESX-5 secretion system protein EccD5 of Mycobacterium marinum (strain ATCC BAA-535 / M).